Reading from the N-terminus, the 555-residue chain is Methionine--tRNA ligase (555 aa).

A 'HIGH' region motif is present at residues 13–23; sequence PYANGSLHIGH. Cys144, Cys147, Cys157, and Cys160 together coordinate Zn(2+). Positions 330–334 match the 'KMSKS' region motif; sequence KISKS. Lys333 serves as a coordination point for ATP.

It belongs to the class-I aminoacyl-tRNA synthetase family. MetG type 1 subfamily. In terms of assembly, monomer. It depends on Zn(2+) as a cofactor.

It is found in the cytoplasm. The enzyme catalyses tRNA(Met) + L-methionine + ATP = L-methionyl-tRNA(Met) + AMP + diphosphate. Is required not only for elongation of protein synthesis but also for the initiation of all mRNA translation through initiator tRNA(fMet) aminoacylation. The sequence is that of Methionine--tRNA ligase from Blochmanniella pennsylvanica (strain BPEN).